A 425-amino-acid chain; its full sequence is GTPase Obg (425 aa).

The Obg domain occupies 1 to 158; that stretch reads MFVDQVKVYV…RYIVMELKLI (158 aa). The tract at residues 118 to 144 is disordered; that stretch reads KGGRGGRGNNRFANSSNPAPHISENGE. The OBG-type G domain maps to 159 to 327; it reads ADVGLVGYPS…LMYAIGDTLA (169 aa). Residues 165-172, 190-194, 211-214, 281-284, and 308-310 contribute to the ATP site; these read GYPSVGKS, FTTLT, DLPG, NKME, and SAA. Mg(2+)-binding residues include serine 172 and threonine 192. Residues 348-425 form the OCT domain; that stretch reads RAEKEPDAFE…IGKLEFDFVE (78 aa).

The protein belongs to the TRAFAC class OBG-HflX-like GTPase superfamily. OBG GTPase family. In terms of assembly, monomer. It depends on Mg(2+) as a cofactor.

It is found in the cytoplasm. Its function is as follows. An essential GTPase which binds GTP, GDP and possibly (p)ppGpp with moderate affinity, with high nucleotide exchange rates and a fairly low GTP hydrolysis rate. Plays a role in control of the cell cycle, stress response, ribosome biogenesis and in those bacteria that undergo differentiation, in morphogenesis control. This chain is GTPase Obg, found in Brevibacillus brevis (strain 47 / JCM 6285 / NBRC 100599).